We begin with the raw amino-acid sequence, 457 residues long: Glutamate--tRNA ligase 1 (457 aa).

A 'HIGH' region motif is present at residues 9–19 (PSPTGYIHIGN). Positions 250-254 (GLSKR) match the 'KMSKS' region motif. Position 253 (K253) interacts with ATP.

It belongs to the class-I aminoacyl-tRNA synthetase family. Glutamate--tRNA ligase type 1 subfamily. In terms of assembly, monomer.

It is found in the cytoplasm. The catalysed reaction is tRNA(Glu) + L-glutamate + ATP = L-glutamyl-tRNA(Glu) + AMP + diphosphate. Catalyzes the attachment of glutamate to tRNA(Glu) in a two-step reaction: glutamate is first activated by ATP to form Glu-AMP and then transferred to the acceptor end of tRNA(Glu). In Brucella canis (strain ATCC 23365 / NCTC 10854 / RM-666), this protein is Glutamate--tRNA ligase 1.